A 341-amino-acid chain; its full sequence is Chorismate synthase (341 aa).

2 disordered regions span residues 45–64 (LERR…GRQE) and 109–134 (HADD…GRET). Arg-48 contributes to the NADP(+) binding site. Residues 128 to 130 (RSS), Gly-280, 295 to 299 (KPTSS), and Arg-308 contribute to the FMN site.

This sequence belongs to the chorismate synthase family. As to quaternary structure, homotetramer. Requires FMNH2 as cofactor.

The enzyme catalyses 5-O-(1-carboxyvinyl)-3-phosphoshikimate = chorismate + phosphate. The protein operates within metabolic intermediate biosynthesis; chorismate biosynthesis; chorismate from D-erythrose 4-phosphate and phosphoenolpyruvate: step 7/7. Catalyzes the anti-1,4-elimination of the C-3 phosphate and the C-6 proR hydrogen from 5-enolpyruvylshikimate-3-phosphate (EPSP) to yield chorismate, which is the branch point compound that serves as the starting substrate for the three terminal pathways of aromatic amino acid biosynthesis. This reaction introduces a second double bond into the aromatic ring system. The sequence is that of Chorismate synthase from Bdellovibrio bacteriovorus (strain ATCC 15356 / DSM 50701 / NCIMB 9529 / HD100).